The chain runs to 497 residues: MSKETSYPKELLCADEKVVYDAIVVGAGVVGPCVATALARKGKKVLIVEREWSQPDRIVGELMQPAGVRALRSLGMVQAINNIDACSTSGYTVIYNGEKISFAYPYKADLSPPEKIPDLVFDGNDKVVDDGTISAKEFEEDEREHGVGFVHGRFLQNLRAICAAEDRVTRLQGNVISILRNDSKEVIGAKVDVPGRGKVDFKAHMTFVCDGIFSRFRKELSTTNTSKVWSSFVGLSLHHADLPTKHHGHVILGSEHMPVIAYQISSTETRILCAYNYPTLPKNVPEWLQKEVQPFIPPSLRKSFDAALESKSYKCMPNSWLPASQNNVTGLCVVGDALNMRHPLTGGGMAVGLMDVVLLVKTIGDMDFSDREEVLNELLGFHYERKAHACVINTLSIALYSLFAADSYYLKKLQKGCFEYLGRGEDWVRQPISFLSGVLPSPYLLTKVFFTVALYSVLINFRGRTPLGFLLAIYEGFAIIFTAAKVFTPFLYEQLLQ.

FAD-binding positions include 29–30, 49–50, R57, R159, V175, D336, and M349; these read VV and ER. 2 helical membrane-spanning segments follow: residues 434–454 and 467–487; these read FLSGVLPSPYLLTKVFFTVAL and LGFLLAIYEGFAIIFTAAKVF.

This sequence belongs to the squalene monooxygenase family. FAD serves as cofactor.

Its subcellular location is the microsome membrane. The protein localises to the endoplasmic reticulum membrane. It carries out the reaction squalene + reduced [NADPH--hemoprotein reductase] + O2 = (S)-2,3-epoxysqualene + oxidized [NADPH--hemoprotein reductase] + H2O + H(+). It participates in terpene metabolism; lanosterol biosynthesis; lanosterol from farnesyl diphosphate: step 2/3. Its function is as follows. Catalyzes the stereospecific oxidation of squalene to (S)-2,3-epoxysqualene, and is considered to be a rate-limiting enzyme in steroid biosynthesis. The polypeptide is Squalene monooxygenase (ERG1) (Eremothecium gossypii (strain ATCC 10895 / CBS 109.51 / FGSC 9923 / NRRL Y-1056) (Yeast)).